A 282-amino-acid polypeptide reads, in one-letter code: UDP-N-acetylenolpyruvoylglucosamine reductase (282 aa).

Residues 15 to 179 (IKSFAKYVYF…LSAEFEFEYK (165 aa)) enclose the FAD-binding PCMH-type domain. Residue R157 is part of the active site. The active-site Proton donor is S207. E278 is an active-site residue.

This sequence belongs to the MurB family. The cofactor is FAD.

It is found in the cytoplasm. The catalysed reaction is UDP-N-acetyl-alpha-D-muramate + NADP(+) = UDP-N-acetyl-3-O-(1-carboxyvinyl)-alpha-D-glucosamine + NADPH + H(+). The protein operates within cell wall biogenesis; peptidoglycan biosynthesis. In terms of biological role, cell wall formation. In Francisella tularensis subsp. tularensis (strain SCHU S4 / Schu 4), this protein is UDP-N-acetylenolpyruvoylglucosamine reductase.